The primary structure comprises 449 residues: Tubulin alpha-8 chain (449 aa).

Positions 1-4 match the MREC motif motif; it reads MREC. GTP-binding residues include glutamine 11, glutamate 71, serine 140, glycine 144, threonine 145, threonine 179, asparagine 206, and asparagine 228. Residue glutamate 71 coordinates Mg(2+). Glutamate 254 is an active-site residue.

This sequence belongs to the tubulin family. In terms of assembly, dimer of alpha and beta chains. A typical microtubule is a hollow water-filled tube with an outer diameter of 25 nm and an inner diameter of 15 nM. Alpha-beta heterodimers associate head-to-tail to form protofilaments running lengthwise along the microtubule wall with the beta-tubulin subunit facing the microtubule plus end conferring a structural polarity. Microtubules usually have 13 protofilaments but different protofilament numbers can be found in some organisms and specialized cells. It depends on Mg(2+) as a cofactor. Some glutamate residues at the C-terminus are polyglycylated, resulting in polyglycine chains on the gamma-carboxyl group. Glycylation is mainly limited to tubulin incorporated into axonemes (cilia and flagella) whereas glutamylation is prevalent in neuronal cells, centrioles, axonemes, and the mitotic spindle. Both modifications can coexist on the same protein on adjacent residues, and lowering polyglycylation levels increases polyglutamylation, and reciprocally. Cilia and flagella glycylation is required for their stability and maintenance. Flagella glycylation controls sperm motility. Post-translationally, some glutamate residues at the C-terminus are polyglutamylated, resulting in polyglutamate chains on the gamma-carboxyl group. Polyglutamylation plays a key role in microtubule severing by spastin (SPAST). SPAST preferentially recognizes and acts on microtubules decorated with short polyglutamate tails: severing activity by SPAST increases as the number of glutamates per tubulin rises from one to eight, but decreases beyond this glutamylation threshold. Glutamylation is also involved in cilia motility. In terms of processing, the C-terminal phenylalanine residue is cleaved by MATCAP1/KIAA0895L.

It localises to the cytoplasm. It is found in the cytoskeleton. The enzyme catalyses GTP + H2O = GDP + phosphate + H(+). Functionally, tubulin is the major constituent of microtubules, a cylinder consisting of laterally associated linear protofilaments composed of alpha- and beta-tubulin heterodimers. Microtubules grow by the addition of GTP-tubulin dimers to the microtubule end, where a stabilizing cap forms. Below the cap, tubulin dimers are in GDP-bound state, owing to GTPase activity of alpha-tubulin. The protein is Tubulin alpha-8 chain (Tuba8) of Rattus norvegicus (Rat).